We begin with the raw amino-acid sequence, 508 residues long: Light-independent protochlorophyllide reductase subunit B (508 aa).

Asp-36 lines the [4Fe-4S] cluster pocket. The Proton donor role is filled by Asp-294. 429–430 (GM) lines the substrate pocket.

Belongs to the ChlB/BchB/BchZ family. In terms of assembly, protochlorophyllide reductase is composed of three subunits; ChlL, ChlN and ChlB. Forms a heterotetramer of two ChlB and two ChlN subunits. [4Fe-4S] cluster is required as a cofactor.

The catalysed reaction is chlorophyllide a + oxidized 2[4Fe-4S]-[ferredoxin] + 2 ADP + 2 phosphate = protochlorophyllide a + reduced 2[4Fe-4S]-[ferredoxin] + 2 ATP + 2 H2O. It participates in porphyrin-containing compound metabolism; chlorophyll biosynthesis (light-independent). In terms of biological role, component of the dark-operative protochlorophyllide reductase (DPOR) that uses Mg-ATP and reduced ferredoxin to reduce ring D of protochlorophyllide (Pchlide) to form chlorophyllide a (Chlide). This reaction is light-independent. The NB-protein (ChlN-ChlB) is the catalytic component of the complex. The protein is Light-independent protochlorophyllide reductase subunit B of Thermosynechococcus vestitus (strain NIES-2133 / IAM M-273 / BP-1).